The primary structure comprises 142 residues: Hemoglobin subunit alpha-B (142 aa).

Residues 2–142 (PFSASDRHDI…VSETLYSKYR (141 aa)) enclose the Globin domain. Q59 contacts O2. H88 is a binding site for heme b.

It belongs to the globin family. Heterotetramer of either two alpha-B chains or two alpha-C chains and two beta chains. The two major hemoglobins, B and C, associate upon deoxygenation to form a trimer of tetramers, BC2, that has a much lower affinity for oxygen than either component alone. In terms of tissue distribution, red blood cells.

Functionally, the alpha-B chain is a component of adult hemoglobin B. The polypeptide is Hemoglobin subunit alpha-B (Aquarana catesbeiana (American bullfrog)).